A 284-amino-acid polypeptide reads, in one-letter code: Acetylglutamate kinase (284 aa).

Substrate contacts are provided by residues 64–65 (GG), Arg-86, and Asn-179.

The protein belongs to the acetylglutamate kinase family. ArgB subfamily.

It is found in the cytoplasm. The catalysed reaction is N-acetyl-L-glutamate + ATP = N-acetyl-L-glutamyl 5-phosphate + ADP. The protein operates within amino-acid biosynthesis; L-arginine biosynthesis; N(2)-acetyl-L-ornithine from L-glutamate: step 2/4. Catalyzes the ATP-dependent phosphorylation of N-acetyl-L-glutamate. The polypeptide is Acetylglutamate kinase (Prochlorococcus marinus subsp. pastoris (strain CCMP1986 / NIES-2087 / MED4)).